The chain runs to 210 residues: Neurotrophin-4 (210 aa).

Positions 1–24 (MLPLPSCSLPILLLFLLPSVPIES) are cleaved as a signal peptide. A propeptide spanning residues 25–80 (QPPPSTLPPFLAPEWDLLSPRVVLSRGAPAGPPLLFLLEAGAFRESAGAPANRSRR) is cleaved from the precursor. N-linked (GlcNAc...) asparagine glycosylation is present at N76. 3 disulfide bridges follow: C97-C170, C141-C199, and C158-C201.

This sequence belongs to the NGF-beta family. In terms of tissue distribution, highest levels in prostate, lower levels in thymus, placenta, and skeletal muscle. Expressed in embryonic and adult tissues.

Its subcellular location is the secreted. In terms of biological role, target-derived survival factor for peripheral sensory sympathetic neurons. May promote ameloblast differentiation and subsequent reduction in proliferation of ameloblasts. The sequence is that of Neurotrophin-4 (NTF4) from Homo sapiens (Human).